The sequence spans 136 residues: Large ribosomal subunit protein uL16c (136 aa).

A compositionally biased stretch (basic residues) spans 1 to 17 (MLSPKRVKFRKQHRGRM). The disordered stretch occupies residues 1-25 (MLSPKRVKFRKQHRGRMKGISTRGN).

Belongs to the universal ribosomal protein uL16 family. Part of the 50S ribosomal subunit.

It is found in the plastid. The protein resides in the chloroplast. This is Large ribosomal subunit protein uL16c from Anthoceros angustus (Hornwort).